The sequence spans 530 residues: Tetrahydroberberine oxidase (530 aa).

The N-terminal stretch at 1 to 24 (MSKMASSIFATFSLLSSLLPTSLA) is a signal peptide. The cysteines at positions 36 and 94 are disulfide-linked. A glycan (N-linked (GlcNAc...) asparagine) is linked at N51. The region spanning 72–246 (TTPKPNFIVT…LAWKIRLVPV (175 aa)) is the FAD-binding PCMH-type domain. The segment at residues 109 to 171 (HDFEGLSYVS…GVHAFPAGLC (63 aa)) is a cross-link (6-(S-cysteinyl)-8alpha-(pros-histidyl)-FAD (His-Cys)). The N-linked (GlcNAc...) asparagine glycan is linked to N483.

This sequence belongs to the oxygen-dependent FAD-linked oxidoreductase family. FAD is required as a cofactor. Post-translationally, the FAD cofactor is bound via a bicovalent 6-S-cysteinyl, 8alpha-N1-histidyl FAD linkage.

It carries out the reaction (S)-canadine + 2 O2 + H(+) = berberine + 2 H2O2. Its function is as follows. Catalyzes the oxidation of different tetrahydroprotoberberines, such as (S)-canadine, (S)-scoulerine and (S)-corypalmine. Catalyzes the oxidation of (S)-coreximine and (S)-tetrahydropalmatine. Catalyzes the oxidation of different 1-benzylisoquinoline alkaloids, such as (S)-norreticuline, (S)-nororientaline, (S)-coclaurine and (S)-norisoorientaline. Exhibits strict specificity for the (S)-enantiomer of tetrahydroprotoberbirines and 1-benzylisoquinoline alkaloids. This Berberis wilsoniae (Mrs Wilson's barberry) protein is Tetrahydroberberine oxidase.